The primary structure comprises 421 residues: Gamma-glutamyl phosphate reductase (421 aa).

The protein belongs to the gamma-glutamyl phosphate reductase family.

The protein resides in the cytoplasm. The enzyme catalyses L-glutamate 5-semialdehyde + phosphate + NADP(+) = L-glutamyl 5-phosphate + NADPH + H(+). It participates in amino-acid biosynthesis; L-proline biosynthesis; L-glutamate 5-semialdehyde from L-glutamate: step 2/2. Catalyzes the NADPH-dependent reduction of L-glutamate 5-phosphate into L-glutamate 5-semialdehyde and phosphate. The product spontaneously undergoes cyclization to form 1-pyrroline-5-carboxylate. The chain is Gamma-glutamyl phosphate reductase from Pseudomonas fluorescens (strain SBW25).